Here is a 571-residue protein sequence, read N- to C-terminus: RUN and FYVE domain-containing protein 4 (571 aa).

An RUN domain is found at 33–166; that stretch reads TDTSAELHRL…VAFELDLQQP (134 aa). Positions 174–207 are disordered; sequence MFSESRCSSSTQTQGRRPRKNKDAPKKIPAAYGG. A compositionally biased stretch (polar residues) spans 178–188; the sequence is SRCSSSTQTQG. Residues 408-481 adopt a coiled-coil conformation; sequence EVSLQDEIKS…ERRDAMYQEE (74 aa). The FYVE-type zinc-finger motif lies at 474-567; that stretch reads RDAMYQEELG…CCPPCAQGRE (94 aa). Zn(2+) is bound by residues cysteine 521, cysteine 524, cysteine 537, cysteine 540, cysteine 545, cysteine 548, cysteine 559, and cysteine 562.

Forms homodimers (via coiled coil domain). Interacts with RAB7A. Forms a ternary complex with RAB7A and LAMP2; the interaction with RAB7A is mediated by RUFY4 (via RUN and coiled coil domains). Interacts with GTP-, but not GDP-bound ARL8A and ARL8B. Interacts with dynactin/DCTN1 and the dynein intermediate chain DYNC1I1/2.

It is found in the cytoplasmic vesicle. Its subcellular location is the autophagosome. It localises to the lysosome. Functionally, ARL8 effector that promotes the coupling of endolysosomes to dynein-dynactin for retrograde transport along microtubules. Acts by binding both GTP-bound ARL8 and dynein-dynactin. In nonneuronal cells, promotes concentration of endolysosomes in the juxtanuclear area. In hippocampal neurons, drives retrograde transport of endolysosomes from the axon to the soma. Positive regulator of macroautophagy in dendritic cells. Increases autophagic flux, probably by stimulating both autophagosome formation and facilitating tethering with lysosomes. Binds to phosphatidylinositol 3-phosphate (PtdIns3P) through its FYVE-type zinc finger. Positive regulator of osteosclast bone-resorbing activity, possibly by promoting late endosome-lysosome fusion by acting as an adapter protein between RAB7A on late endosomes and LAMP2 on primary lysosomes. The chain is RUN and FYVE domain-containing protein 4 (RUFY4) from Homo sapiens (Human).